A 147-amino-acid polypeptide reads, in one-letter code: Ubiquitin-conjugating enzyme E2-16 kDa (147 aa).

Residues 1–147 enclose the UBC core domain; that stretch reads MALKRINKEL…AREWTRKYAI (147 aa). Catalysis depends on cysteine 107, which acts as the Glycyl thioester intermediate.

The protein belongs to the ubiquitin-conjugating enzyme family.

It catalyses the reaction S-ubiquitinyl-[E1 ubiquitin-activating enzyme]-L-cysteine + [E2 ubiquitin-conjugating enzyme]-L-cysteine = [E1 ubiquitin-activating enzyme]-L-cysteine + S-ubiquitinyl-[E2 ubiquitin-conjugating enzyme]-L-cysteine.. It participates in protein modification; protein ubiquitination. Catalyzes the covalent attachment of ubiquitin to other proteins. This is Ubiquitin-conjugating enzyme E2-16 kDa (UBC1) from Pyricularia oryzae (strain 70-15 / ATCC MYA-4617 / FGSC 8958) (Rice blast fungus).